The primary structure comprises 151 residues: UPF0178 protein amb2838 (151 aa).

It belongs to the UPF0178 family.

The sequence is that of UPF0178 protein amb2838 from Paramagnetospirillum magneticum (strain ATCC 700264 / AMB-1) (Magnetospirillum magneticum).